We begin with the raw amino-acid sequence, 116 residues long: Large ribosomal subunit protein bL17 (116 aa).

Belongs to the bacterial ribosomal protein bL17 family. As to quaternary structure, part of the 50S ribosomal subunit. Contacts protein L32.

This is Large ribosomal subunit protein bL17 from Gloeobacter violaceus (strain ATCC 29082 / PCC 7421).